Reading from the N-terminus, the 155-residue chain is Transcriptional repressor NrdR (155 aa).

Residues 3-34 (CPFCNQTDTKVIDSRLVADGVQVRRRRECQAC) fold into a zinc finger. The ATP-cone domain maps to 49 to 139 (PKVIKQDGTR…VYRSFQDISE (91 aa)).

This sequence belongs to the NrdR family. Requires Zn(2+) as cofactor.

In terms of biological role, negatively regulates transcription of bacterial ribonucleotide reductase nrd genes and operons by binding to NrdR-boxes. The protein is Transcriptional repressor NrdR of Teredinibacter turnerae (strain ATCC 39867 / T7901).